We begin with the raw amino-acid sequence, 88 residues long: Small ribosomal subunit protein bS20 (88 aa).

A disordered region spans residues 1 to 27; that stretch reads MANSKSAKKRALQSEKRRQHNASRRSM.

It belongs to the bacterial ribosomal protein bS20 family.

Binds directly to 16S ribosomal RNA. The protein is Small ribosomal subunit protein bS20 of Shewanella sediminis (strain HAW-EB3).